The chain runs to 345 residues: Nuclear distribution protein nudE-like 1-A (345 aa).

Residues tryptophan 19–glycine 190 are a coiled coil. Basic and acidic residues predominate over residues alanine 182–arginine 192. Disordered stretches follow at residues alanine 182–threonine 206 and proline 326–valine 345. A compositionally biased stretch (pro residues) spans proline 334–valine 345.

The protein belongs to the nudE family. Phosphorylated in mitosis.

The protein resides in the cytoplasm. It is found in the cytoskeleton. The protein localises to the microtubule organizing center. It localises to the centrosome. Its subcellular location is the spindle. In terms of biological role, required for organization of the cellular microtubule array and microtubule anchoring at the centrosome. Positively regulates the activity of the minus-end directed microtubule motor protein dynein. May enhance dynein-mediated microtubule sliding by targeting dynein to the microtubule plus end. Positively regulates lysosome peripheral distribution and ruffled border formation in osteoclasts. This is Nuclear distribution protein nudE-like 1-A (ndel1-a) from Xenopus laevis (African clawed frog).